The following is a 179-amino-acid chain: MEIRDNNKVNLCFAFDNLRKELSRPYGILFTNNKVFLDFVSKSIQQGFKVITVGDYVSRVLEENGIIPFLEVIDGKTKRSIPQHRAIVKNKEYRVTNEAGKIQFEIFEIIENILKDRDGGVVFVNGEEDLLVIPVILSANNGDIVIYGQPNAGAVVIIVNEMIKWRVRDILEKAVVEEC.

Residues Asp-55, Val-57, Asp-74, Lys-76, and Glu-128 each contribute to the GTP site.

Belongs to the GTP-dependent DPCK family.

The enzyme catalyses 3'-dephospho-CoA + GTP = GDP + CoA + H(+). Its pathway is cofactor biosynthesis; coenzyme A biosynthesis. In terms of biological role, catalyzes the GTP-dependent phosphorylation of the 3'-hydroxyl group of dephosphocoenzyme A to form coenzyme A (CoA). The sequence is that of GTP-dependent dephospho-CoA kinase from Saccharolobus islandicus (strain M.16.4 / Kamchatka #3) (Sulfolobus islandicus).